Consider the following 93-residue polypeptide: MSRSVKKGPALCPKLMKKVEVASATNQKSIIKTWARWSTITPLMVGLNVGVHDGRRHVPIYITENMVGHKLGEFTTTRNFRGHAKAEKVSQVK.

The protein belongs to the universal ribosomal protein uS19 family.

Its function is as follows. Protein S19 forms a complex with S13 that binds strongly to the 16S ribosomal RNA. The polypeptide is Small ribosomal subunit protein uS19 (Dehalococcoides mccartyi (strain ATCC BAA-2100 / JCM 16839 / KCTC 5957 / BAV1)).